Consider the following 270-residue polypeptide: 25S rRNA adenine-N(1) methyltransferase (270 aa).

S-adenosyl-L-methionine is bound by residues glycine 111 and aspartate 131.

The protein belongs to the BMT2 family.

Its subcellular location is the nucleus. The protein localises to the nucleolus. In terms of biological role, S-adenosyl-L-methionine-dependent methyltransferase that specifically methylates the N(1) position of an adenine present in helix 65 in 25S rRNA. The sequence is that of 25S rRNA adenine-N(1) methyltransferase from Schizosaccharomyces pombe (strain 972 / ATCC 24843) (Fission yeast).